A 140-amino-acid chain; its full sequence is Putative pre-16S rRNA nuclease (140 aa).

The protein belongs to the YqgF nuclease family.

Its subcellular location is the cytoplasm. Functionally, could be a nuclease involved in processing of the 5'-end of pre-16S rRNA. This is Putative pre-16S rRNA nuclease from Yersinia enterocolitica serotype O:8 / biotype 1B (strain NCTC 13174 / 8081).